A 326-amino-acid polypeptide reads, in one-letter code: Ribosomal RNA small subunit methyltransferase H (326 aa).

Residues 35-37 (GGY), Asp53, Phe80, Asp101, and Gln108 contribute to the S-adenosyl-L-methionine site. A disordered region spans residues 260–306 (EGVSRHLPQASNAGAGNPPPSFQAVSRRAVKPLDAETRVNPRSRSAR).

Belongs to the methyltransferase superfamily. RsmH family.

Its subcellular location is the cytoplasm. It catalyses the reaction cytidine(1402) in 16S rRNA + S-adenosyl-L-methionine = N(4)-methylcytidine(1402) in 16S rRNA + S-adenosyl-L-homocysteine + H(+). Its function is as follows. Specifically methylates the N4 position of cytidine in position 1402 (C1402) of 16S rRNA. In Rhodospirillum rubrum (strain ATCC 11170 / ATH 1.1.1 / DSM 467 / LMG 4362 / NCIMB 8255 / S1), this protein is Ribosomal RNA small subunit methyltransferase H.